Consider the following 101-residue polypeptide: Signal recognition particle 19 kDa protein (101 aa).

Belongs to the SRP19 family. As to quaternary structure, part of the signal recognition particle protein translocation system, which is composed of SRP and FtsY. Archaeal SRP consists of a 7S RNA molecule of 300 nucleotides and two protein subunits: SRP54 and SRP19.

The protein localises to the cytoplasm. Involved in targeting and insertion of nascent membrane proteins into the cytoplasmic membrane. Binds directly to 7S RNA and mediates binding of the 54 kDa subunit of the SRP. The polypeptide is Signal recognition particle 19 kDa protein (Methanosarcina acetivorans (strain ATCC 35395 / DSM 2834 / JCM 12185 / C2A)).